A 668-amino-acid chain; its full sequence is Cyclin-dependent kinase 11.2 (668 aa).

Positions 1–265 are disordered; sequence MSNYSTNGSR…EQWESMTENE (265 aa). Basic and acidic residues-rich tracts occupy residues 35–73, 85–127, and 140–163; these read KTKE…DHRD, YCRD…DSLR, and LPDD…KTVM. The segment covering 164-181 has biased composition (acidic residues); it reads EVEDVEMSPVEMLDEEEV. Basic and acidic residues-rich tracts occupy residues 197–212 and 245–265; these read NEPE…DPES and PDDK…TENE. Residues 304-600 enclose the Protein kinase domain; it reads YVILNVIAEG…ASEALQHDWF (297 aa). ATP-binding positions include 310–318 and lysine 333; that span reads IAEGTYGEV. Aspartate 432 (proton acceptor) is an active-site residue.

This sequence belongs to the protein kinase superfamily. CMGC Ser/Thr protein kinase family. CDC2/CDKX subfamily. Expressed in somatic cells and at varying levels throughout the germline (at protein level). Highly expressed in the germ line of hermaphrodites (at protein level).

The protein resides in the nucleus. It is found in the cytoplasm. The catalysed reaction is L-seryl-[protein] + ATP = O-phospho-L-seryl-[protein] + ADP + H(+). It catalyses the reaction L-threonyl-[protein] + ATP = O-phospho-L-threonyl-[protein] + ADP + H(+). Probable cyclin-dependent kinase whose activity is most likely regulated by the cyclin cyl-1/Cylin-L. Acts partially redundantly with cdk-11.1 to ensure embryonic viability. In contrast to cdk-11.1, not essential for male and female fertility. The chain is Cyclin-dependent kinase 11.2 from Caenorhabditis elegans.